Here is a 374-residue protein sequence, read N- to C-terminus: Chaperone protein DnaJ (374 aa).

The region spanning 5–69 (NYYQILGVSK…QKRAAYDRLG (65 aa)) is the J domain. The CR-type zinc finger occupies 137 to 215 (GIEKNISFSS…CHGMGRYHKQ (79 aa)). The Zn(2+) site is built by cysteine 150, cysteine 153, cysteine 167, cysteine 170, cysteine 189, cysteine 192, cysteine 203, and cysteine 206. CXXCXGXG motif repeat units lie at residues 150-157 (CDTCHGSG), 167-174 (CDACSGVG), 189-196 (CHKCQGNG), and 203-210 (CKKCHGMG).

This sequence belongs to the DnaJ family. Homodimer. Zn(2+) serves as cofactor.

It localises to the cytoplasm. Functionally, participates actively in the response to hyperosmotic and heat shock by preventing the aggregation of stress-denatured proteins and by disaggregating proteins, also in an autonomous, DnaK-independent fashion. Unfolded proteins bind initially to DnaJ; upon interaction with the DnaJ-bound protein, DnaK hydrolyzes its bound ATP, resulting in the formation of a stable complex. GrpE releases ADP from DnaK; ATP binding to DnaK triggers the release of the substrate protein, thus completing the reaction cycle. Several rounds of ATP-dependent interactions between DnaJ, DnaK and GrpE are required for fully efficient folding. Also involved, together with DnaK and GrpE, in the DNA replication of plasmids through activation of initiation proteins. The chain is Chaperone protein DnaJ from Rickettsia massiliae (strain Mtu5).